A 561-amino-acid chain; its full sequence is Interleukin-1 receptor-like 2 (561 aa).

An N-terminal signal peptide occupies residues 1–21; the sequence is MGMPPLLFCWVSFVLPLFVAA. Ig-like C2-type domains follow at residues 22-113, 128-215, and 225-321; these read GNCT…INLT, SINS…VRNY, and SGGR…TCHA. The Extracellular segment spans residues 22–338; sequence GNCTDVYMHH…ILKRPAPDFR (317 aa). Residues asparagine 23, asparagine 43, asparagine 55, asparagine 111, and asparagine 130 are each glycosylated (N-linked (GlcNAc...) asparagine). A disulfide bridge links cysteine 44 with cysteine 97. Cysteine 149 and cysteine 199 form a disulfide bridge. N-linked (GlcNAc...) asparagine glycosylation is found at asparagine 231, asparagine 237, asparagine 253, asparagine 269, asparagine 290, and asparagine 302. Cysteine 252 and cysteine 319 are disulfide-bonded. Residues 339 to 358 traverse the membrane as a helical segment; the sequence is AYLIGGLMAFLLLAVSILYI. Residues 359–561 lie on the Cytoplasmic side of the membrane; the sequence is YNTFKVDIVL…LLGHTPRIPG (203 aa). One can recognise a TIR domain in the interval 384 to 539; the sequence is KLYDAYVLYP…KFWKKVRYHM (156 aa). Glutamate 470 is an active-site residue.

This sequence belongs to the interleukin-1 receptor family. In terms of assembly, interacts with IL1RAP; the association is enhanced by IL36B indicative for an functional signaling complex and inhibited by IL36RN. In terms of tissue distribution, predominant expression in the lung and epididymis, with lower expression in cerebral cortex and testis. Expression in the brain is non-neuronal and associated with the cerebral vasculature. Not detected in any cell line tested.

It is found in the membrane. The catalysed reaction is NAD(+) + H2O = ADP-D-ribose + nicotinamide + H(+). Receptor for interleukin-36 (IL36A, IL36B and IL36G). After binding to interleukin-36 associates with the coreceptor IL1RAP to form the interleukin-36 receptor complex which mediates interleukin-36-dependent activation of NF-kappa-B, MAPK and other pathways. The IL-36 signaling system is thought to be present in epithelial barriers and to take part in local inflammatory response; it is similar to the IL-1 system. Seems to be involved in skin inflammatory response by induction of the IL-23/IL-17/IL-22 pathway. Receptor for the interleukin IL36G. Binding to the agonist leads to the activation of NF-kappa-B. The chain is Interleukin-1 receptor-like 2 (Il1rl2) from Rattus norvegicus (Rat).